Here is a 779-residue protein sequence, read N- to C-terminus: Protocadherin beta-8 (779 aa).

The N-terminal stretch at 1 to 28 (METALTKTPEKRQVIFLAILLLLWEASS) is a signal peptide. The Extracellular segment spans residues 29–690 (EAISYSMPEE…QEEDMLTLYL (662 aa)). Cadherin domains are found at residues 75–133 (LQLD…FPEF), 134–242 (PDTE…APQF), 243–346 (LQSL…APKL), 347–450 (TISS…APAF), and 451–560 (TQTS…APFV). C96 and C102 form a disulfide bridge. N-linked (GlcNAc...) asparagine glycosylation occurs at N169. O-linked (Man) serine glycosylation is present at S223. 2 O-linked (Man) threonine glycosylation sites follow: T225 and T227. N-linked (GlcNAc...) asparagine glycosylation is present at N417. N566 carries an N-linked (GlcNAc...) asparagine glycan. Residues 575–675 (LPRAAEPGYL…SQPYLPLPEV (101 aa)) form the Cadherin 6 domain. A helical membrane pass occupies residues 691 to 711 (VIALASVSSLFLLSVLLFVGV). The Cytoplasmic portion of the chain corresponds to 712–779 (KLCKKAREAS…IIPSSLLQDS (68 aa)).

In terms of assembly, forms homodimers in trans (molecules expressed by two different cells). Forms promiscuous heterodimers in cis (at the plasma membrane of the same cell) with other protocadherins.

The protein resides in the cell membrane. Calcium-dependent cell-adhesion protein involved in cells self-recognition and non-self discrimination. Thereby, it is involved in the establishment and maintenance of specific neuronal connections in the brain. The chain is Protocadherin beta-8 from Mus musculus (Mouse).